Consider the following 511-residue polypeptide: TNF receptor-associated factor family protein DDB_G0290931 (511 aa).

The segment at 27–67 (CPICFELIYKKSIYQCSSGHYACQECWEKSLEIKQECMICR) adopts an RING-type; degenerate zinc-finger fold. Residues 103–169 (IDGANQENED…RKLIKDEENG (67 aa)) are a coiled coil. The disordered stretch occupies residues 107 to 159 (NQENEDEENEDEENEDDEDENEDEENGEDDEDKDEDEENENENEENKDEENEK). A compositionally biased stretch (acidic residues) spans 109–155 (ENEDEENEDEENEDDEDENEDEENGEDDEDKDEDEENENENEENKDE). TRAF-type zinc fingers lie at residues 181-234 (RHIQ…QVQL) and 236-293 (NHYD…SELQ). The stretch at 324 to 358 (ELLLKEIEKSKITCSELQRKNDELSSLITEIDDNY) forms a coiled coil. In terms of domain architecture, MATH spans 374–499 (GYTNKWIISN…DDKLTINIYV (126 aa)).

The protein belongs to the TNF receptor-associated factor family. A subfamily.

Its subcellular location is the cytoplasm. In terms of biological role, probable adapter protein and signal transducer that links members of the tumor necrosis factor receptor family to different signaling pathways by association with the receptor cytoplasmic domain and kinases. The sequence is that of TNF receptor-associated factor family protein DDB_G0290931 from Dictyostelium discoideum (Social amoeba).